The primary structure comprises 755 residues: MGSFLRSLRRDVGPPTPSVGATPAKKEPPVPPVTPLEKMLQDMGAIREDGSDKFFGMENYGNTCYCNSILQCLYYSVPFREAVVNYPTRTPIESLEAALANTLRYQNFAANLEAEALAEKQKAANAQRPGAPPNQPQKPEDKDSPEYKKKMALQTLPLLETKNNATSYGMSESLFTSLKDLFESVVASQSRIGIIRPQHFLDVLRREHEMFRTAMHQDAHEFLNLLLNEVVANVEAEASKQPEPERSLPPAESADSTELSGSSGSKTPNTTRWVHELFEGTLTSETQCLTCEKVSQRDEVFLDLSVDLEQHSSVTSCLRKFSAEEMLCERNKFHCDNCGGLQEAEKRMKIKRLPRILALHLKRFKYTEDLQRLQKLFHRVVYPYHLRLFNTTDDAEDPDRLYELYAVVVHIGGGPYHGHYVAIIKTQDRGWLLFDDEMVEPVDKNYVRNFFGDRPGLACAYVLFYQETTLEAVMKEQEQENMDLNTSVADINDSTLKQNGYPLSPGLAHVHSASQIPSPSEPARFSNLQRAPTAPPLFPHPEHADSESSPADPSTTASATPPVPPIPDIHSLPLSPKKSDSHFKKERAKEEKERKANEKEKEKQRRRDQEARIREQRREDAEIRAALEASKASKAEEDRRHSPDDTKKSSHGLSRLKRGSKSFSHRLGKDKENRVSSSSHSATPIAEHPPSRNGASESQQQLPNGQSPGSHGLHTRHTGLDEERDTLKDPKHDRSGHHGKWRSFSLKKKSFSILS.

The interval 1–32 (MGSFLRSLRRDVGPPTPSVGATPAKKEPPVPP) is disordered. One can recognise a USP domain in the interval 55-468 (FGMENYGNTC…CAYVLFYQET (414 aa)). Cys64 acts as the Nucleophile in catalysis. 2 disordered regions span residues 119–146 (EKQK…DSPE) and 237–270 (EASK…TPNT). Residues 237–246 (EASKQPEPER) are compositionally biased toward basic and acidic residues. The segment covering 254-270 (ADSTELSGSSGSKTPNT) has biased composition (polar residues). His419 (proton acceptor) is an active-site residue. Positions 495-755 (TLKQNGYPLS…LKKKSFSILS (261 aa)) are disordered. Over residues 547–560 (ESSPADPSTTASAT) the composition is skewed to low complexity. Residues 577 to 648 (KKSDSHFKKE…RRHSPDDTKK (72 aa)) show a composition bias toward basic and acidic residues. The stretch at 581–630 (SHFKKERAKEEKERKANEKEKEKQRRRDQEARIREQRREDAEIRAALEAS) forms a coiled coil. The span at 654–666 (SRLKRGSKSFSHR) shows a compositional bias: basic residues. Over residues 693–709 (NGASESQQQLPNGQSPG) the composition is skewed to polar residues. The segment covering 718–733 (TGLDEERDTLKDPKHD) has biased composition (basic and acidic residues). Basic residues predominate over residues 734-755 (RSGHHGKWRSFSLKKKSFSILS).

It belongs to the peptidase C19 family. As to quaternary structure, interacts with creA, creC and qutD.

It catalyses the reaction Thiol-dependent hydrolysis of ester, thioester, amide, peptide and isopeptide bonds formed by the C-terminal Gly of ubiquitin (a 76-residue protein attached to proteins as an intracellular targeting signal).. Its function is as follows. Ubiquitin thioesterase component of the regulatory network controlling carbon source utilization through ubiquitination and deubiquitination involving creA, creB, creC, creD and acrB. Deubiquitinates the creA catabolic repressor and the quinate permease qutD. Also plays a role in response to carbon starvation and the control of extracellular proteases activity. The sequence is that of Probable ubiquitin carboxyl-terminal hydrolase creB (creB) from Aspergillus flavus (strain ATCC 200026 / FGSC A1120 / IAM 13836 / NRRL 3357 / JCM 12722 / SRRC 167).